Reading from the N-terminus, the 156-residue chain is Transcriptional repressor NrdR (156 aa).

Residues 3–34 (CPFCSETDTKVIDSRLVADGAQVRRRRECLTC) fold into a zinc finger. In terms of domain architecture, ATP-cone spans 49–139 (PRVIKQDGTR…VYRSFQDLSE (91 aa)).

Belongs to the NrdR family. Zn(2+) serves as cofactor.

Its function is as follows. Negatively regulates transcription of bacterial ribonucleotide reductase nrd genes and operons by binding to NrdR-boxes. This is Transcriptional repressor NrdR from Saccharophagus degradans (strain 2-40 / ATCC 43961 / DSM 17024).